Reading from the N-terminus, the 198-residue chain is 7-methyl-GTP pyrophosphatase (198 aa).

The active-site Proton acceptor is the aspartate 75.

The protein belongs to the Maf family. YceF subfamily. A divalent metal cation is required as a cofactor.

The protein resides in the cytoplasm. The enzyme catalyses N(7)-methyl-GTP + H2O = N(7)-methyl-GMP + diphosphate + H(+). Nucleoside triphosphate pyrophosphatase that hydrolyzes 7-methyl-GTP (m(7)GTP). May have a dual role in cell division arrest and in preventing the incorporation of modified nucleotides into cellular nucleic acids. The polypeptide is 7-methyl-GTP pyrophosphatase (Bartonella quintana (strain Toulouse) (Rochalimaea quintana)).